The chain runs to 626 residues: Putative Xaa-Pro dipeptidyl-peptidase (626 aa).

Active-site charge relay system residues include Ser231, Asp348, and His379.

This sequence belongs to the peptidase S15 family.

The catalysed reaction is Hydrolyzes Xaa-Pro-|- bonds to release unblocked, N-terminal dipeptides from substrates including Ala-Pro-|-p-nitroanilide and (sequentially) Tyr-Pro-|-Phe-Pro-|-Gly-Pro-|-Ile.. The chain is Putative Xaa-Pro dipeptidyl-peptidase from Rhodopirellula baltica (strain DSM 10527 / NCIMB 13988 / SH1).